The chain runs to 489 residues: MNNTHITLVASTVATKNVGRITQIIGPVLDASFPPGKMPNIYNALIIKGQNPAGQEINITCEVQQLLGDNKVRAVAMSATDGLMRGMEVTDTGAPLSVPVGESTLGRIFNVLGEPIDNLGPVDAATTLPIHRSAPAFTQLDTKLSIFETGIKVVDLLAPYRRGGKIGLFGGAGVGKTVLIMELINNIAKAHGGVSVFGGVGERTREGNDLYMEMKESKVINEENISESKVALVYGQMNEPPGARMRVGLTALTMAEYFRDINKQDVLLFIDNIFRFVQAGSEVSALLGRMPSAVGYQPTLSTEMGSLQERITSTKEGSITSIQAVYVPADDLTDPAPATTFAHLDATTVLSRGLAAKGIYPAVDPLDSTSTMLQPWIVGTEHYDTAQGVKQTLQRYKELQDIIAILGLDELSEEDRLVVARARKVERFLSQPFFVAEVFTGSPGKYVSLAETIKGFQMILAGELDHLPEQAFYLVGNINEATAKAATLS.

ATP is bound at residue 170–177 (GGAGVGKT).

This sequence belongs to the ATPase alpha/beta chains family. As to quaternary structure, F-type ATPases have 2 components, CF(1) - the catalytic core - and CF(0) - the membrane proton channel. CF(1) has five subunits: alpha(3), beta(3), gamma(1), delta(1), epsilon(1). CF(0) has four main subunits: a(1), b(1), b'(1) and c(9-12).

The protein resides in the plastid. It localises to the chloroplast thylakoid membrane. It catalyses the reaction ATP + H2O + 4 H(+)(in) = ADP + phosphate + 5 H(+)(out). In terms of biological role, produces ATP from ADP in the presence of a proton gradient across the membrane. The catalytic sites are hosted primarily by the beta subunits. This is ATP synthase subunit beta, chloroplastic from Zygnema circumcarinatum (Green alga).